A 210-amino-acid chain; its full sequence is Imidazoleglycerol-phosphate dehydratase (210 aa).

Belongs to the imidazoleglycerol-phosphate dehydratase family.

It is found in the cytoplasm. It catalyses the reaction D-erythro-1-(imidazol-4-yl)glycerol 3-phosphate = 3-(imidazol-4-yl)-2-oxopropyl phosphate + H2O. It functions in the pathway amino-acid biosynthesis; L-histidine biosynthesis; L-histidine from 5-phospho-alpha-D-ribose 1-diphosphate: step 6/9. The chain is Imidazoleglycerol-phosphate dehydratase from Mycobacterium marinum (strain ATCC BAA-535 / M).